The following is a 1071-amino-acid chain: Kinesin-like protein KIN-14J (1071 aa).

The region spanning 39–142 (KKGHQSLVEW…SLKALKASFS (104 aa)) is the Calponin-homology (CH) domain. The tract at residues 157-181 (WSLPEDHSDSRGDDRNFTDGFQSKE) is disordered. The span at 158–173 (SLPEDHSDSRGDDRNF) shows a compositional bias: basic and acidic residues. A coiled-coil region spans residues 299 to 389 (EKTRIEEKER…ELEKLCQSKS (91 aa)). One can recognise a Kinesin motor domain in the interval 472-800 (NIRVYCRIRP…LKFAERVSGV (329 aa)). 556–563 (GQTGSGKT) provides a ligand contact to ATP. Positions 811–844 (GRDVRQLMEQVSNLKDVIAKKDEELQNFQKVKGN) form a coiled coil. Disordered stretches follow at residues 852–931 (GLSN…AAKG) and 995–1071 (ARMT…NRRR). Basic and acidic residues-rich tracts occupy residues 910–921 (SDERKHQKDYHQ) and 995–1017 (ARMT…KDRT). Positions 1034-1049 (TRPSRLSIATSSSSKA) are enriched in polar residues.

The protein belongs to the TRAFAC class myosin-kinesin ATPase superfamily. Kinesin family. KIN-14 subfamily.

The polypeptide is Kinesin-like protein KIN-14J (Arabidopsis thaliana (Mouse-ear cress)).